The chain runs to 170 residues: Plastocyanin, chloroplastic (170 aa).

Residues 1 to 71 (MATVTSAAVA…SAMLASNAMA (71 aa)) constitute a chloroplast transit peptide. One can recognise a Plastocyanin-like domain in the interval 72–170 (LEVLLGGDDG…AGMVGKVTVN (99 aa)). Cu cation contacts are provided by His-108, Cys-155, His-158, and Met-163.

This sequence belongs to the plastocyanin family. The cofactor is Cu(2+).

It localises to the plastid. The protein localises to the chloroplast thylakoid membrane. Participates in electron transfer between P700 and the cytochrome b6-f complex in photosystem I. The sequence is that of Plastocyanin, chloroplastic (PETE) from Solanum lycopersicum (Tomato).